A 197-amino-acid polypeptide reads, in one-letter code: MKKRRSKKERQALLQQTIETNPFITDEDLAERFQVSIQTVRLDRMELSIPELRERIKHVATKNHEENVKSLPLEEIVGEIIDIELDRHAISIFEVKLEHVFQRNQIARGHHLFAQANSLAVAVIDEDLALTAKSTIRYIRPVKLGERVVAKARVEDVENDKGRTIVKVRSFVGEELVFTGTFEMYRSSNYSEEGNSL.

The protein belongs to the FapR family.

Functionally, transcriptional factor involved in regulation of membrane lipid biosynthesis by repressing genes involved in fatty acid and phospholipid metabolism. The polypeptide is Transcription factor FapR (Bacillus cytotoxicus (strain DSM 22905 / CIP 110041 / 391-98 / NVH 391-98)).